Consider the following 122-residue polypeptide: Small ribosomal subunit protein bS6 (122 aa).

Belongs to the bacterial ribosomal protein bS6 family.

Its function is as follows. Binds together with bS18 to 16S ribosomal RNA. The protein is Small ribosomal subunit protein bS6 (rpsF) of Neisseria meningitidis serogroup B (strain ATCC BAA-335 / MC58).